Here is a 67-residue protein sequence, read N- to C-terminus: Large ribosomal subunit protein bL35 (67 aa).

Positions 1-20 are disordered; sequence MPKLKTKSGAKKRFVPKKSG.

Belongs to the bacterial ribosomal protein bL35 family.

The chain is Large ribosomal subunit protein bL35 from Anaeromyxobacter dehalogenans (strain 2CP-C).